Here is a 367-residue protein sequence, read N- to C-terminus: 3-dehydroquinate synthase (367 aa).

NAD(+) contacts are provided by residues D69–K74, G103–D107, T127–T128, K140, and K149. Zn(2+)-binding residues include E182, H245, and H262.

This sequence belongs to the sugar phosphate cyclases superfamily. Dehydroquinate synthase family. The cofactor is Co(2+). It depends on Zn(2+) as a cofactor. NAD(+) serves as cofactor.

It is found in the cytoplasm. The enzyme catalyses 7-phospho-2-dehydro-3-deoxy-D-arabino-heptonate = 3-dehydroquinate + phosphate. It functions in the pathway metabolic intermediate biosynthesis; chorismate biosynthesis; chorismate from D-erythrose 4-phosphate and phosphoenolpyruvate: step 2/7. Catalyzes the conversion of 3-deoxy-D-arabino-heptulosonate 7-phosphate (DAHP) to dehydroquinate (DHQ). The sequence is that of 3-dehydroquinate synthase from Ectopseudomonas mendocina (strain ymp) (Pseudomonas mendocina).